Reading from the N-terminus, the 327-residue chain is Putative ABC transporter ATP-binding protein MM_0887 (327 aa).

A disordered region spans residues 1 to 44 (MSKSTPLKSSIIRADLPEQAEGRTGPETGKDPEKTGNSEGKTDT). A compositionally biased stretch (basic and acidic residues) spans 28-44 (TGKDPEKTGNSEGKTDT). The 236-residue stretch at 47–282 (IEIKDLCHRY…PALLRKAHLR (236 aa)) folds into the ABC transporter domain. Position 81-88 (81-88 (GANGAGKS)) interacts with ATP.

Belongs to the ABC transporter superfamily.

It is found in the cell membrane. Functionally, probably part of an ABC transporter complex. Responsible for energy coupling to the transport system. This Methanosarcina mazei (strain ATCC BAA-159 / DSM 3647 / Goe1 / Go1 / JCM 11833 / OCM 88) (Methanosarcina frisia) protein is Putative ABC transporter ATP-binding protein MM_0887.